Consider the following 644-residue polypeptide: Serine/threonine kinase YeaG (644 aa).

The protein belongs to the PrkA family. Monomer.

The protein localises to the cytoplasm. The enzyme catalyses L-seryl-[protein] + ATP = O-phospho-L-seryl-[protein] + ADP + H(+). The catalysed reaction is L-threonyl-[protein] + ATP = O-phospho-L-threonyl-[protein] + ADP + H(+). In terms of biological role, kinase that plays a role in the adaptation to sustained nitrogen starvation. This Escherichia coli O157:H7 protein is Serine/threonine kinase YeaG (yeaG).